The chain runs to 318 residues: Methionyl-tRNA formyltransferase (318 aa).

Residue 112–115 (SILP) coordinates (6S)-5,6,7,8-tetrahydrofolate.

This sequence belongs to the Fmt family.

It carries out the reaction L-methionyl-tRNA(fMet) + (6R)-10-formyltetrahydrofolate = N-formyl-L-methionyl-tRNA(fMet) + (6S)-5,6,7,8-tetrahydrofolate + H(+). Attaches a formyl group to the free amino group of methionyl-tRNA(fMet). The formyl group appears to play a dual role in the initiator identity of N-formylmethionyl-tRNA by promoting its recognition by IF2 and preventing the misappropriation of this tRNA by the elongation apparatus. This Shewanella sp. (strain W3-18-1) protein is Methionyl-tRNA formyltransferase.